We begin with the raw amino-acid sequence, 435 residues long: Gamma-glutamyl phosphate reductase (435 aa).

This sequence belongs to the gamma-glutamyl phosphate reductase family.

Its subcellular location is the cytoplasm. It catalyses the reaction L-glutamate 5-semialdehyde + phosphate + NADP(+) = L-glutamyl 5-phosphate + NADPH + H(+). It functions in the pathway amino-acid biosynthesis; L-proline biosynthesis; L-glutamate 5-semialdehyde from L-glutamate: step 2/2. Functionally, catalyzes the NADPH-dependent reduction of L-glutamate 5-phosphate into L-glutamate 5-semialdehyde and phosphate. The product spontaneously undergoes cyclization to form 1-pyrroline-5-carboxylate. The chain is Gamma-glutamyl phosphate reductase from Xylella fastidiosa (strain M12).